We begin with the raw amino-acid sequence, 94 residues long: Acylphosphatase (94 aa).

The region spanning 6–92 is the Acylphosphatase-like domain; sequence RVHVWIRGRV…EGLPTFEIRP (87 aa). Active-site residues include Arg-21 and Asn-39.

Belongs to the acylphosphatase family.

It carries out the reaction an acyl phosphate + H2O = a carboxylate + phosphate + H(+). This chain is Acylphosphatase (acyP), found in Synechococcus sp. (strain JA-2-3B'a(2-13)) (Cyanobacteria bacterium Yellowstone B-Prime).